A 137-amino-acid chain; its full sequence is Small ribosomal subunit protein uS12 (137 aa).

The disordered stretch occupies residues 1-57; the sequence is MPTINQLVRKPRQSKSKKSDSPVLNRGFNSKKKQFTNLNSPQKRGVCTRVGTMTPRK. The residue at position 102 (D102) is a 3-methylthioaspartic acid. The segment at 118–137 is disordered; the sequence is SGVDGRRQGRSLYGTKKPKN.

Belongs to the universal ribosomal protein uS12 family. Part of the 30S ribosomal subunit. Contacts proteins S8 and S17. May interact with IF1 in the 30S initiation complex.

Its function is as follows. With S4 and S5 plays an important role in translational accuracy. Functionally, interacts with and stabilizes bases of the 16S rRNA that are involved in tRNA selection in the A site and with the mRNA backbone. Located at the interface of the 30S and 50S subunits, it traverses the body of the 30S subunit contacting proteins on the other side and probably holding the rRNA structure together. The combined cluster of proteins S8, S12 and S17 appears to hold together the shoulder and platform of the 30S subunit. This Staphylococcus haemolyticus (strain JCSC1435) protein is Small ribosomal subunit protein uS12.